The following is a 142-amino-acid chain: Large ribosomal subunit protein uL13 (142 aa).

It belongs to the universal ribosomal protein uL13 family. Part of the 50S ribosomal subunit.

Its function is as follows. This protein is one of the early assembly proteins of the 50S ribosomal subunit, although it is not seen to bind rRNA by itself. It is important during the early stages of 50S assembly. The chain is Large ribosomal subunit protein uL13 from Burkholderia pseudomallei (strain 1106a).